The chain runs to 203 residues: Glycerol-3-phosphate acyltransferase (203 aa).

6 helical membrane-spanning segments follow: residues 3–23, 51–71, 74–94, 116–136, 140–160, and 164–178; these read ILLA…VVVS, KAAI…VWLV, FGIG…LGHL, AVHP…AFFF, SLAA…LFGT, and PVAW…LLIW.

The protein belongs to the PlsY family. In terms of assembly, probably interacts with PlsX.

The protein localises to the cell inner membrane. The enzyme catalyses an acyl phosphate + sn-glycerol 3-phosphate = a 1-acyl-sn-glycero-3-phosphate + phosphate. It functions in the pathway lipid metabolism; phospholipid metabolism. Its function is as follows. Catalyzes the transfer of an acyl group from acyl-phosphate (acyl-PO(4)) to glycerol-3-phosphate (G3P) to form lysophosphatidic acid (LPA). This enzyme utilizes acyl-phosphate as fatty acyl donor, but not acyl-CoA or acyl-ACP. This chain is Glycerol-3-phosphate acyltransferase, found in Burkholderia pseudomallei (strain 1710b).